The primary structure comprises 273 residues: F-actin-capping protein subunit alpha (273 aa).

This sequence belongs to the F-actin-capping protein alpha subunit family. As to quaternary structure, heterodimer of an alpha and a beta subunit.

Its subcellular location is the cytoplasm. It localises to the cytoskeleton. In terms of biological role, F-actin-capping proteins bind in a Ca(2+)-independent manner to the fast growing ends of actin filaments (barbed end) thereby blocking the exchange of subunits at these ends. Unlike other capping proteins (such as gelsolin and severin), these proteins do not sever actin filaments. The polypeptide is F-actin-capping protein subunit alpha (cap1) (Emericella nidulans (strain FGSC A4 / ATCC 38163 / CBS 112.46 / NRRL 194 / M139) (Aspergillus nidulans)).